The primary structure comprises 238 residues: Proteasome subunit beta type-6 (238 aa).

Position 2 is an N-acetylalanine (A2). The propeptide at 2–33 (AAALAVRRAGSAPAFGPEALTPDWENREVSTG) is removed in mature form. The active-site Nucleophile is T34. At T68 the chain carries Phosphothreonine.

This sequence belongs to the peptidase T1B family. The 26S proteasome consists of a 20S proteasome core and two 19S regulatory subunits. The 20S proteasome core is a barrel-shaped complex made of 28 subunits that are arranged in four stacked rings. The two outer rings are each formed by seven alpha subunits, and the two inner rings are formed by seven beta subunits. The proteolytic activity is exerted by three beta-subunits PSMB5, PSMB6 and PSMB7.

The protein resides in the cytoplasm. Its subcellular location is the nucleus. The enzyme catalyses Cleavage of peptide bonds with very broad specificity.. Functionally, component of the 20S core proteasome complex involved in the proteolytic degradation of most intracellular proteins. This complex plays numerous essential roles within the cell by associating with different regulatory particles. Associated with two 19S regulatory particles, forms the 26S proteasome and thus participates in the ATP-dependent degradation of ubiquitinated proteins. The 26S proteasome plays a key role in the maintenance of protein homeostasis by removing misfolded or damaged proteins that could impair cellular functions, and by removing proteins whose functions are no longer required. Associated with the PA200 or PA28, the 20S proteasome mediates ubiquitin-independent protein degradation. This type of proteolysis is required in several pathways including spermatogenesis (20S-PA200 complex) or generation of a subset of MHC class I-presented antigenic peptides (20S-PA28 complex). Within the 20S core complex, PSMB6 displays a peptidylglutamyl-hydrolyzing activity also termed postacidic or caspase-like activity, meaning that the peptides bond hydrolysis occurs directly after acidic residues. The polypeptide is Proteasome subunit beta type-6 (Psmb6) (Mus musculus (Mouse)).